Consider the following 396-residue polypeptide: MKKYNRIFTIVIDSLGIGGMPDSMEYGDKNVDTLGHIAESVEKFNIPNLEKLGIANLHPIKHVKEANKPLAHYMKMKEASVGKDTMTGHWEMMGLHITKPFQTFTDTGFPQELLDELTKRTGHNIVGNKSSSGTEILDELGEHQMETGDMIVYTSADSVLQICGHEETFGLDELYRCCEIARELTLKDEWKVGRVIARPYLGAKKGEFKRTSNRHDYALKPYGSTALNALKDNGFDVISVGKISDIFDGEGITESNKSKSSVHGMEQTLEIMDRDFKGLCFVNLVDFDALWGHRRNPVGYAEEIEKFDVNLGKVLEKLKEDDLLIITADHGNDPTYVGSDHTREFVPFIAYSPSMKENGLMDTVDSFATIGATIADNFELSMPENTIGKSVLEKLV.

The Mn(2+) site is built by D13, D288, H293, D329, H330, and H341.

Belongs to the phosphopentomutase family. Mn(2+) serves as cofactor.

It is found in the cytoplasm. The catalysed reaction is 2-deoxy-alpha-D-ribose 1-phosphate = 2-deoxy-D-ribose 5-phosphate. It carries out the reaction alpha-D-ribose 1-phosphate = D-ribose 5-phosphate. It participates in carbohydrate degradation; 2-deoxy-D-ribose 1-phosphate degradation; D-glyceraldehyde 3-phosphate and acetaldehyde from 2-deoxy-alpha-D-ribose 1-phosphate: step 1/2. Its function is as follows. Isomerase that catalyzes the conversion of deoxy-ribose 1-phosphate (dRib-1-P) and ribose 1-phosphate (Rib-1-P) to deoxy-ribose 5-phosphate (dRib-5-P) and ribose 5-phosphate (Rib-5-P), respectively. The chain is Phosphopentomutase from Clostridium botulinum (strain Alaska E43 / Type E3).